Consider the following 688-residue polypeptide: PTS system glucoside-specific EIICBA component (688 aa).

Positions 3–427 constitute a PTS EIIC type-1 domain; sequence KKLFGQLQRI…FKLKTPGRED (425 aa). 10 helical membrane passes run 12 to 32, 81 to 101, 137 to 157, 182 to 202, 223 to 243, 284 to 304, 315 to 335, 340 to 360, 364 to 384, and 395 to 415; these read IGKA…LLAF, LGLA…YLIM, LVLG…MGAL, FVPI…SFAW, LTTF…LHHI, AFTT…AFAI, VVGG…ITEP, FLFV…TSFL, LLGV…ILYG, and LVIP…DFAI. Residues 438–519 enclose the PTS EIIB type-1 domain; the sequence is AKLPFDVLDA…AKIMSGEITK (82 aa). The Phosphocysteine intermediate; for EIIB activity role is filled by Cys460. The region spanning 560–664 is the PTS EIIA type-1 domain; that stretch reads DQVFAGKMMG…SIVTPMIITN (105 aa). Catalysis depends on His612, which acts as the Tele-phosphohistidine intermediate; for EIIA activity.

The protein localises to the cell membrane. The phosphoenolpyruvate-dependent sugar phosphotransferase system (sugar PTS), a major carbohydrate active -transport system, catalyzes the phosphorylation of incoming sugar substrates concomitantly with their translocation across the cell membrane. This system is involved in alpha- and beta-glucoside transport. The protein is PTS system glucoside-specific EIICBA component (glcB) of Staphylococcus aureus (strain bovine RF122 / ET3-1).